A 248-amino-acid chain; its full sequence is UPF0246 protein RF_0769 (248 aa).

The protein belongs to the UPF0246 family.

This chain is UPF0246 protein RF_0769, found in Rickettsia felis (strain ATCC VR-1525 / URRWXCal2) (Rickettsia azadi).